The chain runs to 233 residues: Large ribosomal subunit protein uL1 (233 aa).

The protein belongs to the universal ribosomal protein uL1 family. In terms of assembly, part of the 50S ribosomal subunit.

Binds directly to 23S rRNA. The L1 stalk is quite mobile in the ribosome, and is involved in E site tRNA release. Its function is as follows. Protein L1 is also a translational repressor protein, it controls the translation of the L11 operon by binding to its mRNA. This is Large ribosomal subunit protein uL1 from Shewanella halifaxensis (strain HAW-EB4).